The sequence spans 359 residues: Peptide chain release factor 1 (359 aa).

Glutamine 236 is modified (N5-methylglutamine).

The protein belongs to the prokaryotic/mitochondrial release factor family. In terms of processing, methylated by PrmC. Methylation increases the termination efficiency of RF1.

Its subcellular location is the cytoplasm. Its function is as follows. Peptide chain release factor 1 directs the termination of translation in response to the peptide chain termination codons UAG and UAA. This Streptococcus agalactiae serotype V (strain ATCC BAA-611 / 2603 V/R) protein is Peptide chain release factor 1.